The primary structure comprises 39 residues: Protein YkiC (39 aa).

Residues 13-35 form a helical membrane-spanning segment; it reads LLSAKLCNCTQAIMTHIIASFLA.

Its subcellular location is the cell inner membrane. In Escherichia coli (strain K12), this protein is Protein YkiC.